The following is a 358-amino-acid chain: MTPRTRTDLDTITAYVPGKSYPGAIKLASNETTLGPLPSVRDAIADAAANANRYPDNGHVALIAAIADHFGVATANVAVGAGSVSLCQELVHATCNDGDEVMFAWRSFEAYPVVTRVAGAVPVTVPLTADYRHDLDAMAAAVTDRTRLIFVCTPNNPTGPALSTSELERFLDAVPDRVVVALDEAYFEYNRSGTDGLDLFRRYPNVVVLRTFSKAYGLAGLRVGYAIADAAIVAALSKVHIAFTVNAVAQAAAIASLAASGELLARTDGVVAERNRVRDALLAAGYEVPESDANFVYLPLGSRSGAFGAASAEAGVLLRPYGDDGVRITIGDPEENDAFLAFATSTEARSIANVAVRA.

Position 214 is an N6-(pyridoxal phosphate)lysine (K214).

This sequence belongs to the class-II pyridoxal-phosphate-dependent aminotransferase family. In terms of assembly, homodimer. Pyridoxal 5'-phosphate serves as cofactor.

It catalyses the reaction an aromatic L-alpha-amino acid + 2-oxoglutarate = an aromatic oxo-acid + L-glutamate. Functionally, aminotransferase that catalyzes the conversion of aromatic amino acids and 2-oxoglutarate into corresponding aromatic oxo acids and L-glutamate. This Rhodococcus opacus (strain B4) protein is Aromatic amino acid aminotransferase.